A 473-amino-acid chain; its full sequence is tRNA-2-methylthio-N(6)-dimethylallyladenosine synthase (473 aa).

In terms of domain architecture, MTTase N-terminal spans 5–125 (RKLHIKSFGC…LPQLLAEAAR (121 aa)). Positions 14, 50, 88, 166, 170, and 173 each coordinate [4Fe-4S] cluster. The region spanning 152 to 384 (RARGISAFVT…QELIDSQQAA (233 aa)) is the Radical SAM core domain. Residues 387-449 (AAVIGTTVEV…RYSLIGELAA (63 aa)) enclose the TRAM domain. The segment at 452-473 (QHSGFATRSEDSPQSLPITTGA) is disordered.

Belongs to the methylthiotransferase family. MiaB subfamily. In terms of assembly, monomer. [4Fe-4S] cluster serves as cofactor.

The protein localises to the cytoplasm. It catalyses the reaction N(6)-dimethylallyladenosine(37) in tRNA + (sulfur carrier)-SH + AH2 + 2 S-adenosyl-L-methionine = 2-methylsulfanyl-N(6)-dimethylallyladenosine(37) in tRNA + (sulfur carrier)-H + 5'-deoxyadenosine + L-methionine + A + S-adenosyl-L-homocysteine + 2 H(+). Its function is as follows. Catalyzes the methylthiolation of N6-(dimethylallyl)adenosine (i(6)A), leading to the formation of 2-methylthio-N6-(dimethylallyl)adenosine (ms(2)i(6)A) at position 37 in tRNAs that read codons beginning with uridine. This chain is tRNA-2-methylthio-N(6)-dimethylallyladenosine synthase, found in Rhodopseudomonas palustris (strain BisB18).